The primary structure comprises 271 residues: Acyl-[acyl-carrier-protein]--UDP-N-acetylglucosamine O-acyltransferase (271 aa).

This sequence belongs to the transferase hexapeptide repeat family. LpxA subfamily. As to quaternary structure, homotrimer.

Its subcellular location is the cytoplasm. The catalysed reaction is a (3R)-hydroxyacyl-[ACP] + UDP-N-acetyl-alpha-D-glucosamine = a UDP-3-O-[(3R)-3-hydroxyacyl]-N-acetyl-alpha-D-glucosamine + holo-[ACP]. It functions in the pathway glycolipid biosynthesis; lipid IV(A) biosynthesis; lipid IV(A) from (3R)-3-hydroxytetradecanoyl-[acyl-carrier-protein] and UDP-N-acetyl-alpha-D-glucosamine: step 1/6. Involved in the biosynthesis of lipid A, a phosphorylated glycolipid that anchors the lipopolysaccharide to the outer membrane of the cell. This is Acyl-[acyl-carrier-protein]--UDP-N-acetylglucosamine O-acyltransferase from Ralstonia nicotianae (strain ATCC BAA-1114 / GMI1000) (Ralstonia solanacearum).